A 226-amino-acid polypeptide reads, in one-letter code: Ras-related protein RGP1 (226 aa).

25–32 is a binding site for GTP; sequence GDSAVGKS. The Effector region motif lies at 47–55; the sequence is SKATIGVEF. GTP contacts are provided by residues 73 to 77 and 131 to 134; these read DTAGQ and NKSD. 2 S-geranylgeranyl cysteine lipidation sites follow: C223 and C224.

The protein belongs to the small GTPase superfamily. Rab family.

Its subcellular location is the cell membrane. May play an important role in plant growth and development. The chain is Ras-related protein RGP1 (RGP1) from Oryza sativa subsp. japonica (Rice).